The following is a 134-amino-acid chain: (R)-specific enoyl-CoA hydratase (134 aa).

Residues 5–119 (SLEVGQKARL…ATLTTRIFTQ (115 aa)) form the MaoC-like domain. A (3R)-3-hydroxyacyl-CoA-binding positions include 32 to 37 (DFNPLH), Gly55, and Phe84.

Homodimer.

The catalysed reaction is a (3R)-3-hydroxyacyl-CoA = a (2E)-enoyl-CoA + H2O. Its function is as follows. Catalyzes the hydration of trans-2-enoyl-CoA with a chain-length of 4-6 carbon atoms, forming the corresponding (3R)-3-hydroxyacyl-CoA. This Aeromonas caviae (Aeromonas punctata) protein is (R)-specific enoyl-CoA hydratase (phaJ).